The sequence spans 912 residues: Protein translocase subunit SecA (912 aa).

Residues Gln87, 105 to 109 (GEGKT), and Asp510 contribute to the ATP site. The disordered stretch occupies residues 854–912 (KLRHEQASAAQAEGEGDDGQQGQQATPETFVRQERKVGRNEPCPCGSGKKYKQCCGKVS). The Zn(2+) site is built by Cys896, Cys898, Cys907, and Cys908.

Belongs to the SecA family. Monomer and homodimer. Part of the essential Sec protein translocation apparatus which comprises SecA, SecYEG and auxiliary proteins SecDF-YajC and YidC. Requires Zn(2+) as cofactor.

It localises to the cell inner membrane. It is found in the cytoplasm. The catalysed reaction is ATP + H2O + cellular proteinSide 1 = ADP + phosphate + cellular proteinSide 2.. Functionally, part of the Sec protein translocase complex. Interacts with the SecYEG preprotein conducting channel. Has a central role in coupling the hydrolysis of ATP to the transfer of proteins into and across the cell membrane, serving both as a receptor for the preprotein-SecB complex and as an ATP-driven molecular motor driving the stepwise translocation of polypeptide chains across the membrane. In Marinobacter nauticus (strain ATCC 700491 / DSM 11845 / VT8) (Marinobacter aquaeolei), this protein is Protein translocase subunit SecA.